The following is a 60-amino-acid chain: Protein translocase subunit SecE (60 aa).

A helical transmembrane segment spans residues 31 to 51 (VIVVSTVIFFLVFFYALDLGI).

The protein belongs to the SecE/SEC61-gamma family. As to quaternary structure, component of the Sec protein translocase complex. Heterotrimer consisting of SecY, SecE and SecG subunits. The heterotrimers can form oligomers, although 1 heterotrimer is thought to be able to translocate proteins. Interacts with the ribosome. Interacts with SecDF, and other proteins may be involved. Interacts with SecA.

The protein resides in the cell membrane. Functionally, essential subunit of the Sec protein translocation channel SecYEG. Clamps together the 2 halves of SecY. May contact the channel plug during translocation. The chain is Protein translocase subunit SecE from Staphylococcus aureus (strain Mu50 / ATCC 700699).